The primary structure comprises 967 residues: Siderophore exporter MmpL4 (967 aa).

Helical transmembrane passes span 26-46 (AFAVPIILGWLAVCVVVTVFV), 210-230 (VIFIMLLLVYRSIITVVLLLI), 242-262 (VVAVLGHSGAIGLTTFAVSLL), 303-323 (AHVILGSGLTIAGATFCLSFA), 333-353 (IPCAVGMLVAVAVALTLGPAV), 384-404 (WPLPVLVATCAIALVGLLALP), 769-789 (WDLLIAAISSLCLIFIIMLII), 793-813 (FIAAAVIVGTVALSLGASFGL), 821-841 (ILAIHLHWLVLAMSVIVLLAV), 875-895 (VVTNAGLVFAVTMASMAVSDL), and 913-934 (TLIVRSFMTPSIAALLGRWFWW). The disordered stretch occupies residues 943-967 (ARTPTVPSETQPAGRPLAMSSDRLG).

It belongs to the resistance-nodulation-cell division (RND) (TC 2.A.6) family. MmpL subfamily. In terms of assembly, interacts with MmpS4.

It localises to the cell inner membrane. In terms of biological role, part of an export system, which is required for biosynthesis and secretion of siderophores. The protein is Siderophore exporter MmpL4 (mmpL4) of Mycobacterium tuberculosis (strain CDC 1551 / Oshkosh).